Reading from the N-terminus, the 473-residue chain is MSFPLIFERSRKGRRGLKLVKAVPKAEDLIPKEHLREVPPRLPEVDELTLVRHYTGLSRRQVGVDTTFYPLGSCTMKYNPKLHEEAARLFADLHPYQDPRTAQGALRLMWELGEYLKALTGMDAITLEPAAGAHGELTGILIIRAYHEDRGEGRTRRVVLVPDSAHGSNPATASMAGYQVREIPSGPEGEVDLEALKRELGPHVAALMLTNPNTLGLFERRILEISRLCKEAGVQLYYDGANLNAIMGWARPGDMGFDVVHLNLHKTFTVPHGGGGPGSGPVGVKAHLAPYLPVPLVERGEEGFYLDFDRPKSIGRVRSFYGNFLALVRAWAYIRTLGLEGLKKAAALAVLNARYLKELLKEKGYRVPYDGPSMHEFVAQPPQGFRALDLAKGLLELGFHPPTVYFPLIVKEALMVEPTETEAKETLEAFAEAMGALLKKPKEWLENAPYSTPVRRLDELRANRSPKLTYFDE.

The residue at position 266 (Lys-266) is an N6-(pyridoxal phosphate)lysine.

This sequence belongs to the GcvP family. C-terminal subunit subfamily. The glycine cleavage system is composed of four proteins: P, T, L and H. In this organism, the P 'protein' is a heterodimer of two subunits. Requires pyridoxal 5'-phosphate as cofactor.

The enzyme catalyses N(6)-[(R)-lipoyl]-L-lysyl-[glycine-cleavage complex H protein] + glycine + H(+) = N(6)-[(R)-S(8)-aminomethyldihydrolipoyl]-L-lysyl-[glycine-cleavage complex H protein] + CO2. Its function is as follows. The glycine cleavage system catalyzes the degradation of glycine. The P protein binds the alpha-amino group of glycine through its pyridoxal phosphate cofactor; CO(2) is released and the remaining methylamine moiety is then transferred to the lipoamide cofactor of the H protein. The protein is Probable glycine dehydrogenase (decarboxylating) subunit 2 of Thermus thermophilus (strain ATCC BAA-163 / DSM 7039 / HB27).